Here is a 207-residue protein sequence, read N- to C-terminus: Glycerol-3-phosphate acyltransferase (207 aa).

6 consecutive transmembrane segments (helical) span residues 1–21 (MIII…GKYF), 42–62 (ILGV…GTLA), 65–85 (IPII…FAII), 105–125 (AGVL…IFLL), 138–158 (ITVA…GFIL), and 159–179 (TDYD…IIIR).

This sequence belongs to the PlsY family. As to quaternary structure, probably interacts with PlsX.

It is found in the cell membrane. The enzyme catalyses an acyl phosphate + sn-glycerol 3-phosphate = a 1-acyl-sn-glycero-3-phosphate + phosphate. It functions in the pathway lipid metabolism; phospholipid metabolism. Its function is as follows. Catalyzes the transfer of an acyl group from acyl-phosphate (acyl-PO(4)) to glycerol-3-phosphate (G3P) to form lysophosphatidic acid (LPA). This enzyme utilizes acyl-phosphate as fatty acyl donor, but not acyl-CoA or acyl-ACP. The protein is Glycerol-3-phosphate acyltransferase of Streptococcus agalactiae serotype Ia (strain ATCC 27591 / A909 / CDC SS700).